Consider the following 669-residue polypeptide: DNA polymerase epsilon subunit B (669 aa).

Residues Gln96–Asp115 are disordered.

It belongs to the DNA polymerase epsilon subunit B family. Heterotetramer. Consists of four subunits: POL2, DPB2, DPB3 and DPB4.

It localises to the nucleus. Functionally, as accessory component of the DNA polymerase epsilon (DNA polymerase II) participates in chromosomal DNA replication. The sequence is that of DNA polymerase epsilon subunit B (DPB2) from Debaryomyces hansenii (strain ATCC 36239 / CBS 767 / BCRC 21394 / JCM 1990 / NBRC 0083 / IGC 2968) (Yeast).